The primary structure comprises 853 residues: Trimethylguanosine synthase (853 aa).

Positions 54-84 (NNAGDQGTEEEEDGHSNGTAESHSPNESDLD) are disordered. T61 carries the phosphothreonine modification. A compositionally biased stretch (polar residues) spans 69–80 (SNGTAESHSPNE). Residues S81, S85, S92, and S139 each carry the phosphoserine modification. Y144 carries the phosphotyrosine modification. The residue at position 152 (S152) is a Phosphoserine. 2 disordered regions span residues 328 to 437 (VEQS…DDNG) and 523 to 549 (ETSQDSLSQNKMQDTCTSSDSEEQDMS). A compositionally biased stretch (basic and acidic residues) spans 365–383 (KENDISENRSSDQPAKELQ). 2 positions are modified to phosphoserine: S405 and S431. Acidic residues predominate over residues 424–435 (DVDENPDSEVDD). Residues 526 to 541 (QDSLSQNKMQDTCTSS) are compositionally biased toward polar residues. S572 carries the post-translational modification Phosphoserine. The disordered stretch occupies residues 594–623 (CSTEEIPNSPHAETEVEIKKKKKKNKNKKI). Residues 612–621 (KKKKKKNKNK) show a composition bias toward basic residues. D711 contributes to the S-adenosyl-L-methionine binding site.

It belongs to the methyltransferase superfamily. Trimethylguanosine synthase family. May form homooligomers. Interacts with CREBBP/CBP, EED/WAIT1, EP300/P300, NCOA6/PRIP, PPARBP/PBP and SMN. As to expression, ubiquitously expressed.

The protein resides in the cytoplasm. Its subcellular location is the nucleus. The protein localises to the cajal body. It is found in the nucleolus. The catalysed reaction is a 5'-end (N(7)-methyl 5'-triphosphoguanosine)-ribonucleoside in snRNA + S-adenosyl-L-methionine = a 5'-end (N(2),N(7)-dimethyl 5'-triphosphoguanosine)-ribonucleoside in snRNA + S-adenosyl-L-homocysteine + H(+). It carries out the reaction a 5'-end (N(7)-methyl 5'-triphosphoguanosine)-ribonucleoside in snoRNA + S-adenosyl-L-methionine = a 5'-end (N(2),N(7)-dimethyl 5'-triphosphoguanosine)-ribonucleoside in snoRNA + S-adenosyl-L-homocysteine + H(+). The enzyme catalyses a 5'-end (N(2),N(7)-dimethyl 5'-triphosphoguanosine)-ribonucleoside in snRNA + S-adenosyl-L-methionine = a 5'-end (N(2),N(2),N(7)-trimethyl 5'-triphosphoguanosine)-ribonucleoside in snRNA + S-adenosyl-L-homocysteine + H(+). It catalyses the reaction a 5'-end (N(2),N(7)-dimethyl 5'-triphosphoguanosine)-ribonucleoside in snoRNA + S-adenosyl-L-methionine = a 5'-end (N(2),N(2),N(7)-trimethyl 5'-triphosphoguanosine)-ribonucleoside in snoRNA + S-adenosyl-L-homocysteine + H(+). Functionally, catalyzes the 2 serial methylation steps for the conversion of the 7-monomethylguanosine (m(7)G) caps of snRNAs and snoRNAs to a 2,2,7-trimethylguanosine (m(2,2,7)G) cap structure. The enzyme is specific for guanine, and N7 methylation must precede N2 methylation. Hypermethylation of the m7G cap of U snRNAs leads to their concentration in nuclear foci, their colocalization with coilin and the formation of canonical Cajal bodies (CBs). Plays a role in transcriptional regulation. This is Trimethylguanosine synthase (Tgs1) from Mus musculus (Mouse).